Here is a 479-residue protein sequence, read N- to C-terminus: Muscarinic acetylcholine receptor M4 (479 aa).

At Met-1 to Glu-30 the chain is on the extracellular side. N-linked (GlcNAc...) asparagine glycosylation is found at Asn-8 and Asn-13. A helical transmembrane segment spans residues Met-31–Met-53. Over Leu-54–Asn-67 the chain is Cytoplasmic. A helical membrane pass occupies residues Tyr-68–Tyr-88. At Thr-89–Asp-105 the chain is on the extracellular side. A disulfide bridge connects residues Cys-104 and Cys-184. A helical membrane pass occupies residues Leu-106–Phe-127. At Asp-128–Met-147 the chain is on the cytoplasmic side. A helical transmembrane segment spans residues Ala-148–Trp-170. Topologically, residues Gln-171–Pro-192 are extracellular. Residues Ala-193–Ile-215 traverse the membrane as a helical segment. At His-216 to Thr-401 the chain is on the cytoplasmic side. The tract at residues Leu-271–Asn-334 is disordered. Over residues Ala-274–Pro-285 the composition is skewed to pro residues. Positions Asn-293–Asn-303 are enriched in polar residues. Residues Thr-310–Leu-333 show a composition bias toward low complexity. Residues Ile-402–Val-422 traverse the membrane as a helical segment. Residues Asn-423 to Ser-436 lie on the Extracellular side of the membrane. Residues Ile-437–Cys-456 form a helical membrane-spanning segment. At Asn-457–Arg-479 the chain is on the cytoplasmic side. Phosphothreonine occurs at positions 459, 463, and 477.

The protein belongs to the G-protein coupled receptor 1 family. Muscarinic acetylcholine receptor subfamily. CHRM4 sub-subfamily.

The protein localises to the cell membrane. It is found in the postsynaptic cell membrane. The muscarinic acetylcholine receptor mediates various cellular responses, including inhibition of adenylate cyclase, breakdown of phosphoinositides and modulation of potassium channels through the action of G proteins. Primary transducing effect is inhibition of adenylate cyclase. This Mus musculus (Mouse) protein is Muscarinic acetylcholine receptor M4 (Chrm4).